Consider the following 455-residue polypeptide: P2X purinoceptor 5 (455 aa).

Residues 1–34 (MGQAAWKGFVLSLFDYKTAKFVVAKSKKVGLLYR) are Cytoplasmic-facing. Residues 35-55 (VLQLIILLYLLIWVFLIKKSY) traverse the membrane as a helical segment. The Extracellular portion of the chain corresponds to 56–341 (QDIDTSLQSA…SIIPTVINIG (286 aa)). ATP contacts are provided by Lys69 and Lys71. The N-linked (GlcNAc...) asparagine glycan is linked to Asn77. 3 disulfides stabilise this stretch: Cys118-Cys169, Cys129-Cys152, and Cys135-Cys163. Residue Asn157 is glycosylated (N-linked (GlcNAc...) asparagine). Residue Thr189 coordinates ATP. Asn202 carries N-linked (GlcNAc...) asparagine glycosylation. Disulfide bonds link Cys220/Cys229 and Cys263/Cys272. Residues Asn294, Arg296, and Lys314 each contribute to the ATP site. A helical membrane pass occupies residues 342-362 (SGLALMGAGAFFCDLVLIYLI). Residues 363 to 455 (RKSEFYRDKK…QSQILHPVKT (93 aa)) lie on the Cytoplasmic side of the membrane. Residues 384-401 (NVEVEANEMEQERPEDEP) show a composition bias toward acidic residues. Positions 384–422 (NVEVEANEMEQERPEDEPLERVRQDEQSQELAQSGRKQN) are disordered. Over residues 412–422 (QELAQSGRKQN) the composition is skewed to polar residues.

The protein belongs to the P2X receptor family. Functional P2XRs are organized as homomeric and heteromeric trimers. Homotrimer. Forms heterotrimer with P2RX1. Predominantly expressed in heart but are also present in brain, spinal cord and adrenal gland.

The protein resides in the cell membrane. The catalysed reaction is Na(+)(in) = Na(+)(out). It catalyses the reaction Ca(2+)(in) = Ca(2+)(out). The enzyme catalyses chloride(in) = chloride(out). Its activity is regulated as follows. Activated by ATP. Slowly desensitizing. Not activated by ATP agonist alpha/beta-methylene-ATP. Highly sensitive to the antagonists suramin and PPADS. Its function is as follows. ATP-gated nonselective transmembrane cation channel. Permeable to potassium, sodium and calcium. Unlike other P2RX receptors, the P2X5 receptor is also permeable to chloride. Acts as an important regulator of inflammatory-related bone loss and osteoclast multinucleation. This Rattus norvegicus (Rat) protein is P2X purinoceptor 5 (P2rx5).